A 599-amino-acid polypeptide reads, in one-letter code: Aspartate--tRNA(Asp/Asn) ligase (599 aa).

L-aspartate is bound at residue E180. The interval 204–207 is aspartate; it reads QLLK. An L-aspartate-binding site is contributed by R226. Residues 226–228 and Q235 contribute to the ATP site; that span reads RDE. Residue H457 participates in L-aspartate binding. ATP is bound at residue E491. L-aspartate is bound at residue R498. ATP is bound at residue 543 to 546; it reads GWDR. Residues 565–599 are disordered; it reads KAGGGRDPLTGAPAPISDEQRAETGVDYDPDADEN. Residues 590–599 show a composition bias toward acidic residues; that stretch reads VDYDPDADEN.

The protein belongs to the class-II aminoacyl-tRNA synthetase family. Type 1 subfamily. As to quaternary structure, homodimer.

The protein localises to the cytoplasm. It catalyses the reaction tRNA(Asx) + L-aspartate + ATP = L-aspartyl-tRNA(Asx) + AMP + diphosphate. Functionally, aspartyl-tRNA synthetase with relaxed tRNA specificity since it is able to aspartylate not only its cognate tRNA(Asp) but also tRNA(Asn). Reaction proceeds in two steps: L-aspartate is first activated by ATP to form Asp-AMP and then transferred to the acceptor end of tRNA(Asp/Asn). The polypeptide is Aspartate--tRNA(Asp/Asn) ligase (Bifidobacterium longum (strain NCC 2705)).